The chain runs to 457 residues: tRNA-2-methylthio-N(6)-dimethylallyladenosine synthase (457 aa).

An MTTase N-terminal domain is found at 3–120; it reads KKVYVKTFGC…LPQMIDARRA (118 aa). Residues cysteine 12, cysteine 49, cysteine 83, cysteine 157, cysteine 161, and cysteine 164 each contribute to the [4Fe-4S] cluster site. Positions 143-377 constitute a Radical SAM core domain; it reads RVEGPSAFVS…QATIEENVAR (235 aa). The region spanning 380 to 447 is the TRAM domain; sequence QSMVGKVERI…PHSLRGELVL (68 aa).

This sequence belongs to the methylthiotransferase family. MiaB subfamily. As to quaternary structure, monomer. [4Fe-4S] cluster serves as cofactor.

The protein resides in the cytoplasm. It catalyses the reaction N(6)-dimethylallyladenosine(37) in tRNA + (sulfur carrier)-SH + AH2 + 2 S-adenosyl-L-methionine = 2-methylsulfanyl-N(6)-dimethylallyladenosine(37) in tRNA + (sulfur carrier)-H + 5'-deoxyadenosine + L-methionine + A + S-adenosyl-L-homocysteine + 2 H(+). Catalyzes the methylthiolation of N6-(dimethylallyl)adenosine (i(6)A), leading to the formation of 2-methylthio-N6-(dimethylallyl)adenosine (ms(2)i(6)A) at position 37 in tRNAs that read codons beginning with uridine. The chain is tRNA-2-methylthio-N(6)-dimethylallyladenosine synthase from Burkholderia cenocepacia (strain HI2424).